The primary structure comprises 120 residues: Crustacean hyperglycemic hormones 1 (120 aa).

The N-terminal stretch at 1-27 (MTAFRMVWSMLLASLLMLLVASSTAPA) is a signal peptide. Cystine bridges form between C53–C89, C69–C85, and C72–C98. V118 is modified (valine amide).

The protein belongs to the arthropod CHH/MIH/GIH/VIH hormone family.

The protein resides in the secreted. In terms of biological role, hormone found in the sinus gland of isopods and decapods which controls the blood sugar level. Has a secretagogue action over the amylase released from the midgut gland. May act as a stress hormone and may be involved in the control of molting and reproduction. The protein is Crustacean hyperglycemic hormones 1 (CHH1) of Penaeus monodon (Giant tiger prawn).